A 250-amino-acid polypeptide reads, in one-letter code: DNA repair protein RecO (250 aa).

The protein belongs to the RecO family.

In terms of biological role, involved in DNA repair and RecF pathway recombination. The sequence is that of DNA repair protein RecO from Lactobacillus acidophilus (strain ATCC 700396 / NCK56 / N2 / NCFM).